Here is a 548-residue protein sequence, read N- to C-terminus: Probable nuclear hormone receptor HR3 (548 aa).

The segment at methionine 1–threonine 27 is disordered. Residues isoleucine 101–phenylalanine 176 constitute a DNA-binding region (nuclear receptor). 2 consecutive NR C4-type zinc fingers follow at residues cysteine 104–cysteine 124 and cysteine 140–cysteine 164. The tract at residues methionine 198–asparagine 228 is disordered. Positions aspartate 211–glutamine 222 are enriched in polar residues. In terms of domain architecture, NR LBD spans isoleucine 295–leucine 539.

The protein belongs to the nuclear hormone receptor family. NR1 subfamily.

Its subcellular location is the nucleus. Its function is as follows. Putative receptor whose ligand is not yet known. The chain is Probable nuclear hormone receptor HR3 (HR3) from Manduca sexta (Tobacco hawkmoth).